Consider the following 338-residue polypeptide: UDP-glucose 4-epimerase (338 aa).

NAD(+)-binding positions include 11 to 12, 31 to 36, 58 to 59, 80 to 84, Asn99, Ser124, Tyr149, Lys153, and Phe178; these read FI, DNLCNS, DI, and FAGLK. Positions 124 and 149 each coordinate substrate. The active-site Proton acceptor is Tyr149. Residues Asn179, 199–200, 216–218, Arg231, and 292–295 contribute to the substrate site; these read NL, SVF, and RAGD.

The protein belongs to the NAD(P)-dependent epimerase/dehydratase family. In terms of assembly, homodimer. It depends on NAD(+) as a cofactor.

The enzyme catalyses UDP-alpha-D-glucose = UDP-alpha-D-galactose. The protein operates within carbohydrate metabolism; galactose metabolism. Its function is as follows. Involved in the metabolism of galactose. Plays an essential role in the incorporation of galactose into meningococcal lipopolysaccharide surface molecules, which are important for pathogenesis. Catalyzes the conversion of UDP-galactose (UDP-Gal) to UDP-glucose (UDP-Glc) through a mechanism involving the transient reduction of NAD. The protein is UDP-glucose 4-epimerase (galE) of Neisseria gonorrhoeae.